We begin with the raw amino-acid sequence, 286 residues long: Phosducin-like protein 2 (286 aa).

Residues Ser35 and Ser62 each carry the phosphoserine modification. Residues 96-286 (FGEVFHINKP…INDDDDGFFD (191 aa)) form a thioredoxin fold region.

Belongs to the phosducin family. As to quaternary structure, interacts with the G protein beta-gamma subunit complex (STE4-STE18 complex). Interacts with CCT2; this interaction leads to inhibition of CCT complex mediated actin folding.

The protein localises to the cytoplasm. Functionally, essential for cell growth. Inhibits early G-protein signaling events following pheromone stimulation. Inhibits the folding activity of the chaperonin-containing T-complex (CCT) CCT2 which leads to inhibition of cytoskeletal actin folding. Plays a role in cell cycle progression in G1/S phase. In Saccharomyces cerevisiae (strain ATCC 204508 / S288c) (Baker's yeast), this protein is Phosducin-like protein 2.